A 61-amino-acid chain; its full sequence is Small ribosomal subunit protein uS14 (61 aa).

Positions 24, 27, 40, and 43 each coordinate Zn(2+).

It belongs to the universal ribosomal protein uS14 family. Zinc-binding uS14 subfamily. In terms of assembly, part of the 30S ribosomal subunit. Contacts proteins S3 and S10. Zn(2+) serves as cofactor.

Functionally, binds 16S rRNA, required for the assembly of 30S particles and may also be responsible for determining the conformation of the 16S rRNA at the A site. In Nitratiruptor sp. (strain SB155-2), this protein is Small ribosomal subunit protein uS14.